A 214-amino-acid polypeptide reads, in one-letter code: Adenylate kinase (214 aa).

Position 10–15 (10–15) interacts with ATP; that stretch reads GAGKGT. Residues 30–59 are NMP; sequence STGDMLRAAIKAGTELGKQAKSVIDAGQLV. AMP contacts are provided by residues Thr31, Arg36, 57–59, 85–88, and Gln92; these read QLV and GFPR. Positions 122–159 are LID; sequence GRRAHLASGRTYHNVYNPPKVEGKDDVTGEDLVIREDD. Residues Arg123 and 132-133 each bind ATP; that span reads TY. Residues Arg156 and Arg167 each contribute to the AMP site. Residue Lys200 participates in ATP binding.

Belongs to the adenylate kinase family. In terms of assembly, monomer.

It is found in the cytoplasm. It catalyses the reaction AMP + ATP = 2 ADP. It participates in purine metabolism; AMP biosynthesis via salvage pathway; AMP from ADP: step 1/1. Its function is as follows. Catalyzes the reversible transfer of the terminal phosphate group between ATP and AMP. Plays an important role in cellular energy homeostasis and in adenine nucleotide metabolism. This chain is Adenylate kinase, found in Photobacterium profundum (strain SS9).